A 105-amino-acid polypeptide reads, in one-letter code: Small ribosomal subunit protein uS10 (105 aa).

This sequence belongs to the universal ribosomal protein uS10 family. As to quaternary structure, part of the 30S ribosomal subunit.

Its function is as follows. Involved in the binding of tRNA to the ribosomes. This is Small ribosomal subunit protein uS10 from Lachnoclostridium phytofermentans (strain ATCC 700394 / DSM 18823 / ISDg) (Clostridium phytofermentans).